A 655-amino-acid polypeptide reads, in one-letter code: A-type voltage-gated potassium channel KCND3 (655 aa).

At 1–182 the chain is on the cytoplasmic side; sequence MAAGVAAWLP…FENPHTSTLA (182 aa). Residues 6–21 are interaction with KCNIP1 and KCNIP2; the sequence is AAWLPFARAAAIGWMP. The interaction with KCNIP1 stretch occupies residues 70 to 78; that stretch reads EKEFFFNED. Residues histidine 104, cysteine 110, cysteine 131, and cysteine 132 each coordinate Zn(2+). A Phosphoserine modification is found at serine 153. The helical transmembrane segment at 183–204 threads the bilayer; it reads LVFYYVTGFFIAVSVITNVVET. Topologically, residues 205–223 are extracellular; that stretch reads VPCGTVPGSKELPCGERYS. Residues 224–246 form a helical membrane-spanning segment; that stretch reads VAFFCLDTACVMIFTVEYLLRLF. At 247-253 the chain is on the cytoplasmic side; it reads AAPSRYR. The chain crosses the membrane as a helical span at residues 254 to 277; it reads FIRSVMSIIDVVAIMPYYIGLVMT. At 278–283 the chain is on the extracellular side; that stretch reads NNEDVS. The helical; Voltage-sensor transmembrane segment at 284–306 threads the bilayer; the sequence is GAFVTLRVFRVFRIFKFSRHSQG. Over 307 to 318 the chain is Cytoplasmic; that stretch reads LRILGYTLKSCA. Residues 319–343 form a helical membrane-spanning segment; that stretch reads SELGFLLFSLTMAIIIFATVMFYAE. The Extracellular segment spans residues 344-352; it reads KGSSASKFT. The segment at residues 353 to 366 is an intramembrane region (helical); the sequence is SIPASFWYTIVTMT. Residues threonine 367, leucine 368, glycine 369, and tyrosine 370 each coordinate K(+). Residues 367 to 372 carry the Selectivity filter motif; sequence TLGYGD. An intramembrane segment occupies 367 to 374; that stretch reads TLGYGDMV. A helical membrane pass occupies residues 378–400; the sequence is IAGKIFGSICSLSGVLVIALPVP. The Cytoplasmic segment spans residues 401-655; it reads VIVSNFSRIY…TSNVVKVSAL (255 aa). At threonine 459 the chain carries Phosphothreonine. An interaction with KCNIP1 and KCNIP2 region spans residues 470-487; it reads SLIESQHHHLLHCLEKTT. Positions 472–487 are mediates dendritic targeting; the sequence is IESQHHHLLHCLEKTT. The tract at residues 523–565 is disordered; sequence SSMQNYPSTRSPSLSSHSGLTTTCCSRRSKKTTHLPNSNLPAT. The segment covering 529–548 has biased composition (low complexity); that stretch reads PSTRSPSLSSHSGLTTTCCS. Serine 569 and serine 585 each carry phosphoserine. The tract at residues 615 to 655 is disordered; sequence ISIPTPPALTPEGESRPPPASPGPNTNIPSITSNVVKVSAL. Residues 637 to 655 show a composition bias toward polar residues; that stretch reads GPNTNIPSITSNVVKVSAL.

Belongs to the potassium channel family. D (Shal) (TC 1.A.1.2) subfamily. Kv4.3/KCND3 sub-subfamily. Homotetramer. Heterotetramer with KCND2. Associates with the regulatory subunit KCNIP3. Associates with the regulatory subunit KCNIP4. Interacts with KCNE1, KCNE2, SCN1B and KCNAB1 and DLG1. Component of heteromultimeric potassium channels. Identified in potassium channel complexes containing KCND1, KCND2, KCND3, KCNIP1, KCNIP2, KCNIP3, KCNIP4, DPP6 and DPP10. Interacts with KCNIP1; each KCNIP1 monomer interacts with two adjacent KCND3 subunits, through both the N-terminal inactivation ball of a KCND3 subunit and a C-terminal helix from the adjacent KCND3 subunit, clamping them together; this interaction stabilizes the tetrameric form and modulates the channel gating kinetics namely channel activation and inactivation kinetics and rate of recovery from inactivation. Interacts with DPP6; this interaction modulates the channel gating kinetics namely channel activation and inactivation kinetics and rate of recovery from inactivation. Interacts with KCNIP2; each KCNIP2 monomer interacts with two adjacent KCND3 subunits, through both the N-terminal inactivation ball of a KCND3 subunit and a C-terminal helix from the adjacent KCND3 subunit, clamping them together; this interaction modulates the channel gating kinetics. Regulated through phosphorylation at Ser-569 by CaMK2D.

It is found in the cell membrane. Its subcellular location is the sarcolemma. The protein resides in the cell projection. It localises to the dendrite. The enzyme catalyses K(+)(in) = K(+)(out). Functionally, pore-forming (alpha) subunit of voltage-gated A-type potassium channels that mediates transmembrane potassium transport in excitable membranes, in brain and heart. In cardiomyocytes, may generate the transient outward potassium current I(To). In neurons, may conduct the transient subthreshold somatodendritic A-type potassium current (ISA). Kinetics properties are characterized by fast activation at subthreshold membrane potentials, rapid inactivation, and quick recovery from inactivation. Channel properties are modulated by interactions with regulatory subunits. Interaction with the regulatory subunits KCNIP1 or KCNIP2 modulates the channel gating kinetics namely channel activation and inactivation kinetics and rate of recovery from inactivation. Likewise, interaction with DPP6 modulates the channel gating kinetics namely channel activation and inactivation kinetics. The chain is A-type voltage-gated potassium channel KCND3 from Mus musculus (Mouse).